The primary structure comprises 446 residues: 5-methylthioadenosine/S-adenosylhomocysteine deaminase (446 aa).

2 residues coordinate Zn(2+): His72 and His74. Residues Glu101 and His194 each coordinate substrate. His221 lines the Zn(2+) pocket. Substrate-binding residues include Glu224 and Asp309. Position 309 (Asp309) interacts with Zn(2+).

This sequence belongs to the metallo-dependent hydrolases superfamily. MTA/SAH deaminase family. The cofactor is Zn(2+).

The catalysed reaction is S-adenosyl-L-homocysteine + H2O + H(+) = S-inosyl-L-homocysteine + NH4(+). The enzyme catalyses S-methyl-5'-thioadenosine + H2O + H(+) = S-methyl-5'-thioinosine + NH4(+). Catalyzes the deamination of 5-methylthioadenosine and S-adenosyl-L-homocysteine into 5-methylthioinosine and S-inosyl-L-homocysteine, respectively. Is also able to deaminate adenosine. This chain is 5-methylthioadenosine/S-adenosylhomocysteine deaminase, found in Saccharophagus degradans (strain 2-40 / ATCC 43961 / DSM 17024).